Reading from the N-terminus, the 507-residue chain is Cobyric acid synthase (507 aa).

A GATase cobBQ-type domain is found at 251–448 (DIDIAVVHLP…LHGLFDSDAF (198 aa)). The active-site Nucleophile is Cys-332. Residue His-440 is part of the active site.

The protein belongs to the CobB/CobQ family. CobQ subfamily.

It functions in the pathway cofactor biosynthesis; adenosylcobalamin biosynthesis. Functionally, catalyzes amidations at positions B, D, E, and G on adenosylcobyrinic A,C-diamide. NH(2) groups are provided by glutamine, and one molecule of ATP is hydrogenolyzed for each amidation. The chain is Cobyric acid synthase from Klebsiella pneumoniae subsp. pneumoniae (strain ATCC 700721 / MGH 78578).